A 166-amino-acid chain; its full sequence is Gem-associated protein 6 (166 aa).

The region spanning W4–G73 is the Sm domain. The AD domain maps to E68 to Q166. S94 and S165 each carry phosphoserine.

In terms of assembly, part of the core SMN complex that contains SMN1, GEMIN2/SIP1, DDX20/GEMIN3, GEMIN4, GEMIN5, GEMIN6, GEMIN7, GEMIN8 and STRAP/UNRIP. Part of the SMN-Sm complex that contains SMN1, GEMIN2/SIP1, DDX20/GEMIN3, GEMIN4, GEMIN5, GEMIN6, GEMIN7, GEMIN8, STRAP/UNRIP and the Sm proteins SNRPB, SNRPD1, SNRPD2, SNRPD3, SNRPE, SNRPF and SNRPG. Interacts with GEMIN7; the interaction is direct. Interacts with GEMIN8; the interaction is direct. Interacts with SNRPB, SNRPD2, SNRPD3 and SNRPE; the interaction is direct.

The protein localises to the nucleus. The protein resides in the nucleoplasm. Its subcellular location is the gem. It localises to the cytoplasm. Functionally, the SMN complex catalyzes the assembly of small nuclear ribonucleoproteins (snRNPs), the building blocks of the spliceosome, and thereby plays an important role in the splicing of cellular pre-mRNAs. Most spliceosomal snRNPs contain a common set of Sm proteins SNRPB, SNRPD1, SNRPD2, SNRPD3, SNRPE, SNRPF and SNRPG that assemble in a heptameric protein ring on the Sm site of the small nuclear RNA to form the core snRNP (Sm core). In the cytosol, the Sm proteins SNRPD1, SNRPD2, SNRPE, SNRPF and SNRPG are trapped in an inactive 6S pICln-Sm complex by the chaperone CLNS1A that controls the assembly of the core snRNP. To assemble core snRNPs, the SMN complex accepts the trapped 5Sm proteins from CLNS1A forming an intermediate. Binding of snRNA inside 5Sm triggers eviction of the SMN complex, thereby allowing binding of SNRPD3 and SNRPB to complete assembly of the core snRNP. This Bos taurus (Bovine) protein is Gem-associated protein 6 (GEMIN6).